The primary structure comprises 182 residues: PTS system glucitol/sorbitol-specific EIIC component (182 aa).

One can recognise a PTS EIIC type-5 domain in the interval Met1–Asn182. Helical transmembrane passes span Gly28–Gly48, Val63–Ala83, and Thr139–Val159.

The protein resides in the cell membrane. In terms of biological role, the phosphoenolpyruvate-dependent sugar phosphotransferase system (PTS), a major carbohydrate active transport system, catalyzes the phosphorylation of incoming sugar substrates concomitant with their translocation across the cell membrane. The enzyme II complex composed of SrlA, SrlB and SrlE is involved in glucitol/sorbitol transport. This is PTS system glucitol/sorbitol-specific EIIC component (srlA) from Clostridium beijerinckii (strain ATCC 51743 / NCIMB 8052) (Clostridium acetobutylicum).